We begin with the raw amino-acid sequence, 354 residues long: NADH-quinone oxidoreductase subunit H (354 aa).

A run of 8 helical transmembrane segments spans residues 22-42 (ILIR…YLIL), 91-111 (YLIA…VIPF), 124-144 (LLYV…AGWA), 168-188 (MGFA…SAIV), 203-223 (VLSW…ISGV), 255-275 (LFFL…ALLF), 291-311 (IPGF…FIWI), and 326-346 (LGWK…AIWI).

It belongs to the complex I subunit 1 family. NDH-1 is composed of 14 different subunits. Subunits NuoA, H, J, K, L, M, N constitute the membrane sector of the complex.

The protein localises to the cell inner membrane. It catalyses the reaction a quinone + NADH + 5 H(+)(in) = a quinol + NAD(+) + 4 H(+)(out). In terms of biological role, NDH-1 shuttles electrons from NADH, via FMN and iron-sulfur (Fe-S) centers, to quinones in the respiratory chain. The immediate electron acceptor for the enzyme in this species is believed to be ubiquinone. Couples the redox reaction to proton translocation (for every two electrons transferred, four hydrogen ions are translocated across the cytoplasmic membrane), and thus conserves the redox energy in a proton gradient. This subunit may bind ubiquinone. This is NADH-quinone oxidoreductase subunit H from Cupriavidus pinatubonensis (strain JMP 134 / LMG 1197) (Cupriavidus necator (strain JMP 134)).